The following is a 365-amino-acid chain: MLIYLFEWLSHYFKGLEVFSSYISVRIIMISITSLLITLALGRPMISWLQKMQIGQIVRDDGPQSHFSKRNTPTMGGVLILSSVIISCLLWGDLTSIYLWILILVVIFFGAIGFFDDYLKLVLKHPKGLRAKYKFALQSIFSIVLAIVLFYLLSKNGQMSLSIPFSKSLYIPIGIVIFVVLAFFIINGSSNAVNLTDGLDGLAIVPVVLVAAGLGIYAYIETNSTLANYLLFNYLGNPGLAEVAVFCAAVCGSGLAFLWFNSHPAEVFMGDVGSLTLGAVLGVIAVMVRQELIFFIMGLLFVVEALSVMLQVGSYKLRNGKRIFRMAPIHHHFELKGWPETKVVIRFWIISLILFLIGLAAIKVR.

10 helical membrane passes run 22–42, 74–94, 95–115, 133–153, 168–188, 201–221, 240–260, 267–287, 292–312, and 342–362; these read YISVRIIMISITSLLITLALG, TMGGVLILSSVIISCLLWGDL, TSIYLWILILVVIFFGAIGFF, YKFALQSIFSIVLAIVLFYLL, SLYIPIGIVIFVVLAFFIING, GLAIVPVVLVAAGLGIYAYIE, LAEVAVFCAAVCGSGLAFLWF, VFMGDVGSLTLGAVLGVIAVM, LIFFIMGLLFVVEALSVMLQV, and KVVIRFWIISLILFLIGLAAI.

This sequence belongs to the glycosyltransferase 4 family. MraY subfamily. Mg(2+) is required as a cofactor.

The protein resides in the cell inner membrane. The enzyme catalyses UDP-N-acetyl-alpha-D-muramoyl-L-alanyl-gamma-D-glutamyl-meso-2,6-diaminopimeloyl-D-alanyl-D-alanine + di-trans,octa-cis-undecaprenyl phosphate = di-trans,octa-cis-undecaprenyl diphospho-N-acetyl-alpha-D-muramoyl-L-alanyl-D-glutamyl-meso-2,6-diaminopimeloyl-D-alanyl-D-alanine + UMP. It functions in the pathway cell wall biogenesis; peptidoglycan biosynthesis. Its function is as follows. Catalyzes the initial step of the lipid cycle reactions in the biosynthesis of the cell wall peptidoglycan: transfers peptidoglycan precursor phospho-MurNAc-pentapeptide from UDP-MurNAc-pentapeptide onto the lipid carrier undecaprenyl phosphate, yielding undecaprenyl-pyrophosphoryl-MurNAc-pentapeptide, known as lipid I. This is Phospho-N-acetylmuramoyl-pentapeptide-transferase from Francisella tularensis subsp. tularensis (strain FSC 198).